The following is a 57-amino-acid chain: Large ribosomal subunit protein bL33 (57 aa).

The protein belongs to the bacterial ribosomal protein bL33 family.

In Shewanella denitrificans (strain OS217 / ATCC BAA-1090 / DSM 15013), this protein is Large ribosomal subunit protein bL33.